The following is a 351-amino-acid chain: Dihydroorotate dehydrogenase (quinone) (351 aa).

Residues 61–65 and T85 each bind FMN; that span reads AGLDK. Residue K65 participates in substrate binding. A substrate-binding site is contributed by 110-114; it reads NRMGF. FMN is bound by residues N139 and N172. N172 lines the substrate pocket. The Nucleophile role is filled by S175. Position 177 (N177) interacts with substrate. Residues K217 and T245 each coordinate FMN. 246-247 lines the substrate pocket; sequence NT. FMN is bound by residues G268, G297, and 318–319; that span reads YS.

The protein belongs to the dihydroorotate dehydrogenase family. Type 2 subfamily. Monomer. Requires FMN as cofactor.

It localises to the cell membrane. It catalyses the reaction (S)-dihydroorotate + a quinone = orotate + a quinol. It functions in the pathway pyrimidine metabolism; UMP biosynthesis via de novo pathway; orotate from (S)-dihydroorotate (quinone route): step 1/1. Catalyzes the conversion of dihydroorotate to orotate with quinone as electron acceptor. This chain is Dihydroorotate dehydrogenase (quinone), found in Xanthomonas euvesicatoria pv. vesicatoria (strain 85-10) (Xanthomonas campestris pv. vesicatoria).